Here is an 81-residue protein sequence, read N- to C-terminus: Cytotoxin 2 (81 aa).

Residues 1–21 (MKTLLLTLVVVTIVCLDLGYT) form the signal peptide. 4 disulfide bridges follow: Cys24–Cys42, Cys35–Cys59, Cys63–Cys74, and Cys75–Cys80.

This sequence belongs to the three-finger toxin family. Short-chain subfamily. Type IA cytotoxin sub-subfamily. As to quaternary structure, monomer in solution; Homodimer and oligomer in the presence of negatively charged lipids forming a pore with a size ranging between 20 and 30 Angstroms. Expressed by the venom gland.

It is found in the secreted. It localises to the target cell membrane. Its function is as follows. Basic protein that binds to cell membrane and depolarizes cardiomyocytes. It also shows lytic activities, but 2-fold less important than that of CTX-A4. It binds to the integrin alpha-V/beta-3 (ITGAV/ITGB3) with a moderate affinity. It may interact with sulfatides in the cell membrane which induces pore formation and cell internalization and is responsible for cytotoxicity in cardiomyocytes. It may also target the mitochondrial membrane and induce mitochondrial swelling and fragmentation. The polypeptide is Cytotoxin 2 (Naja atra (Chinese cobra)).